A 314-amino-acid polypeptide reads, in one-letter code: tRNA dimethylallyltransferase (314 aa).

36 to 43 (GPTASGKT) contacts ATP. 38-43 (TASGKT) provides a ligand contact to substrate. An interaction with substrate tRNA region spans residues 61-64 (DSVQ).

This sequence belongs to the IPP transferase family. In terms of assembly, monomer. Requires Mg(2+) as cofactor.

It catalyses the reaction adenosine(37) in tRNA + dimethylallyl diphosphate = N(6)-dimethylallyladenosine(37) in tRNA + diphosphate. Its function is as follows. Catalyzes the transfer of a dimethylallyl group onto the adenine at position 37 in tRNAs that read codons beginning with uridine, leading to the formation of N6-(dimethylallyl)adenosine (i(6)A). The protein is tRNA dimethylallyltransferase of Sorangium cellulosum (strain So ce56) (Polyangium cellulosum (strain So ce56)).